Consider the following 463-residue polypeptide: NADH dehydrogenase [ubiquinone] iron-sulfur protein 2, mitochondrial (463 aa).

The transit peptide at 1-33 directs the protein to the mitochondrion; sequence MAALRALGGLRGVAAQVLRPGAGVRLPIQPSRG. Position 62 is an N6-acetyllysine (K62). At R118 the chain carries Symmetric dimethylarginine. C326, C332, and C347 together coordinate [4Fe-4S] cluster.

It belongs to the complex I 49 kDa subunit family. Core subunit of respiratory chain NADH dehydrogenase (Complex I) which is composed of 45 different subunits. Component of the iron-sulfur (IP) fragment of the enzyme. Interacts with NDUFAF3. Interacts with NDUFAF7. Interacts with CERS2. The cofactor is [4Fe-4S] cluster. Post-translationally, dimethylation at Arg-118 by NDUFAF7 takes place after NDUFS2 assembles into the complex I, leading to stabilize the early intermediate complex.

It localises to the mitochondrion inner membrane. It catalyses the reaction a ubiquinone + NADH + 5 H(+)(in) = a ubiquinol + NAD(+) + 4 H(+)(out). Core subunit of the mitochondrial membrane respiratory chain NADH dehydrogenase (Complex I) which catalyzes electron transfer from NADH through the respiratory chain, using ubiquinone as an electron acceptor. Essential for the catalytic activity and assembly of complex I. Redox-sensitive, critical component of the oxygen-sensing pathway in the pulmonary vasculature which plays a key role in acute pulmonary oxygen-sensing and hypoxic pulmonary vasoconstriction. Plays an important role in carotid body sensing of hypoxia. Essential for glia-like neural stem and progenitor cell proliferation, differentiation and subsequent oligodendrocyte or neuronal maturation. The chain is NADH dehydrogenase [ubiquinone] iron-sulfur protein 2, mitochondrial (NDUFS2) from Pongo pygmaeus (Bornean orangutan).